Here is a 347-residue protein sequence, read N- to C-terminus: Holliday junction branch migration complex subunit RuvB (347 aa).

Residues 4–184 (QDRIVDGHAS…FGIVQRLEFY (181 aa)) are large ATPase domain (RuvB-L). Residues Arg24, Gly65, Lys68, Thr69, Thr70, 131–133 (EDF), Arg174, Tyr184, and Arg221 each bind ATP. Residue Thr69 participates in Mg(2+) binding. Residues 185-255 (SVQDLTHIVK…IADSALNMLN (71 aa)) are small ATPAse domain (RuvB-S). A head domain (RuvB-H) region spans residues 258–347 (HHGFDHMDRR…SQQQDSLPGI (90 aa)). Positions 294, 313, and 318 each coordinate DNA.

The protein belongs to the RuvB family. As to quaternary structure, homohexamer. Forms an RuvA(8)-RuvB(12)-Holliday junction (HJ) complex. HJ DNA is sandwiched between 2 RuvA tetramers; dsDNA enters through RuvA and exits via RuvB. An RuvB hexamer assembles on each DNA strand where it exits the tetramer. Each RuvB hexamer is contacted by two RuvA subunits (via domain III) on 2 adjacent RuvB subunits; this complex drives branch migration. In the full resolvosome a probable DNA-RuvA(4)-RuvB(12)-RuvC(2) complex forms which resolves the HJ.

It is found in the cytoplasm. It catalyses the reaction ATP + H2O = ADP + phosphate + H(+). Its function is as follows. The RuvA-RuvB-RuvC complex processes Holliday junction (HJ) DNA during genetic recombination and DNA repair, while the RuvA-RuvB complex plays an important role in the rescue of blocked DNA replication forks via replication fork reversal (RFR). RuvA specifically binds to HJ cruciform DNA, conferring on it an open structure. The RuvB hexamer acts as an ATP-dependent pump, pulling dsDNA into and through the RuvAB complex. RuvB forms 2 homohexamers on either side of HJ DNA bound by 1 or 2 RuvA tetramers; 4 subunits per hexamer contact DNA at a time. Coordinated motions by a converter formed by DNA-disengaged RuvB subunits stimulates ATP hydrolysis and nucleotide exchange. Immobilization of the converter enables RuvB to convert the ATP-contained energy into a lever motion, pulling 2 nucleotides of DNA out of the RuvA tetramer per ATP hydrolyzed, thus driving DNA branch migration. The RuvB motors rotate together with the DNA substrate, which together with the progressing nucleotide cycle form the mechanistic basis for DNA recombination by continuous HJ branch migration. Branch migration allows RuvC to scan DNA until it finds its consensus sequence, where it cleaves and resolves cruciform DNA. The polypeptide is Holliday junction branch migration complex subunit RuvB (Teredinibacter turnerae (strain ATCC 39867 / T7901)).